A 545-amino-acid chain; its full sequence is CTP synthase (545 aa).

The tract at residues 1–266 (MTTNYIFVTG…DDYICKRFSL (266 aa)) is amidoligase domain. Residue Ser-14 coordinates CTP. Ser-14 is a binding site for UTP. ATP is bound by residues 15–20 (SLGKGI) and Asp-72. The Mg(2+) site is built by Asp-72 and Glu-140. Residues 147 to 149 (DIE), 187 to 192 (KTKPTQ), and Lys-223 each bind CTP. Residues 187–192 (KTKPTQ) and Lys-223 each bind UTP. An ATP-binding site is contributed by 239–241 (KDV). The Glutamine amidotransferase type-1 domain occupies 291 to 542 (TIGMVGKYIE…VKAASEFQKR (252 aa)). L-glutamine is bound at residue Gly-352. The Nucleophile; for glutamine hydrolysis role is filled by Cys-379. L-glutamine is bound by residues 380–383 (LGMQ), Glu-403, and Arg-470. Active-site residues include His-515 and Glu-517.

It belongs to the CTP synthase family. In terms of assembly, homotetramer.

It carries out the reaction UTP + L-glutamine + ATP + H2O = CTP + L-glutamate + ADP + phosphate + 2 H(+). The enzyme catalyses L-glutamine + H2O = L-glutamate + NH4(+). The catalysed reaction is UTP + NH4(+) + ATP = CTP + ADP + phosphate + 2 H(+). The protein operates within pyrimidine metabolism; CTP biosynthesis via de novo pathway; CTP from UDP: step 2/2. Its activity is regulated as follows. Allosterically activated by GTP, when glutamine is the substrate; GTP has no effect on the reaction when ammonia is the substrate. The allosteric effector GTP functions by stabilizing the protein conformation that binds the tetrahedral intermediate(s) formed during glutamine hydrolysis. Inhibited by the product CTP, via allosteric rather than competitive inhibition. Its function is as follows. Catalyzes the ATP-dependent amination of UTP to CTP with either L-glutamine or ammonia as the source of nitrogen. Regulates intracellular CTP levels through interactions with the four ribonucleotide triphosphates. This chain is CTP synthase, found in Escherichia coli O127:H6 (strain E2348/69 / EPEC).